Consider the following 61-residue polypeptide: Tryptophyllin-1 (61 aa).

Residues 1-22 (MDILKKSLFLALFLGLVSISFC) form the signal peptide. Residues 23 to 53 (DEEKRQDDDESNESEEKKEIHEEGSQEERRE) constitute a propeptide that is removed on maturation. The segment at 24–61 (EEKRQDDDESNESEEKKEIHEEGSQEERREKPPPWVPV) is disordered. The segment covering 36–55 (SEEKKEIHEEGSQEERREKP) has biased composition (basic and acidic residues).

As to expression, expressed by the skin glands.

It localises to the secreted. The synthetic peptide inhibits bradykinin-induced relaxation of rat tail artery smooth muscle, and also has anti-proliferative effects on the human prostate cancer cell lines LNCaP, PC3 and DU145. The protein is Tryptophyllin-1 of Phyllomedusa sauvagei (Sauvage's leaf frog).